We begin with the raw amino-acid sequence, 1125 residues long: Probable phospholipid-transporting ATPase IIB (1125 aa).

Residues 1–131 are Cytoplasmic-facing; sequence MADGIPLNPV…IKNQKYNIVT (131 aa). Residues 132-152 traverse the membrane as a helical segment; sequence FVPGVLYQQFKFFLNLYFLVV. The Extracellular portion of the chain corresponds to 153–161; that stretch reads ACSQFVPSL. Residues 162–182 traverse the membrane as a helical segment; that stretch reads KIGYLYTYWAPLGFVLAVTMV. Residues 183–369 lie on the Cytoplasmic side of the membrane; that stretch reads REAVDEVRRC…LDLELNRLTK (187 aa). A helical transmembrane segment spans residues 370-390; that stretch reads ALFLAQVVLSVVMVALQGFLG. Over 391–395 the chain is Extracellular; it reads PWFRN. Residues 396–415 traverse the membrane as a helical segment; it reads LFRFVVLFSYIIPISLRVNL. Residues 416 to 928 lie on the Cytoplasmic side of the membrane; sequence DMGKSAYGWM…ALGQFVMHRG (513 aa). Asp-455 (4-aspartylphosphate intermediate) is an active-site residue. Asp-455, Lys-456, and Thr-457 together coordinate ATP. Asp-455 contacts Mg(2+). Thr-457 lines the Mg(2+) pocket. Low complexity predominate over residues 500 to 511; it reads QSNGSSASSTPS. Disordered regions lie at residues 500–525 and 552–574; these read QSNGSSASSTPSRKPQPPAPKVRKSV and GANAEPESTEADQDFSDDNRTYQ. Positions 558 to 567 are enriched in acidic residues; the sequence is ESTEADQDFS. ATP contacts are provided by Glu-580, Phe-622, Lys-627, Lys-646, Arg-675, Thr-676, Thr-755, Gly-756, Asp-757, Arg-837, and Lys-843. Asp-863 provides a ligand contact to Mg(2+). Asn-866 and Asp-867 together coordinate ATP. Asp-867 serves as a coordination point for Mg(2+). The helical transmembrane segment at 929 to 949 threads the bilayer; that stretch reads MIISTMQAVFSSIFYFASVPL. Over 950 to 951 the chain is Extracellular; it reads YQ. Residues 952–972 form a helical membrane-spanning segment; sequence GFLMVGYATIYTMFPVFSLVL. At 973–1001 the chain is on the cytoplasmic side; that stretch reads DQDVKPEMALLYPELYKDLTKGRSLSFKT. Residues 1002–1022 traverse the membrane as a helical segment; it reads FLIWVLISIYQGGILMYGALV. At 1023-1030 the chain is on the extracellular side; sequence LFDQEFVH. A helical membrane pass occupies residues 1031–1051; that stretch reads VVAISFTALILTELLMVALTI. Residues 1052-1055 lie on the Cytoplasmic side of the membrane; the sequence is RTWH. Residues 1056–1076 traverse the membrane as a helical segment; it reads WLMVVAQLISLACYLASLAFL. At 1077 to 1088 the chain is on the extracellular side; sequence NEYFDLSFITTR. Residues 1089–1109 form a helical membrane-spanning segment; that stretch reads VFLWKVCVITLVSCLPLYIIK. At 1110–1125 the chain is on the cytoplasmic side; it reads YLKRKFSPPSYSKLSS.

The protein belongs to the cation transport ATPase (P-type) (TC 3.A.3) family. Type IV subfamily. Mg(2+) serves as cofactor.

The protein localises to the golgi apparatus. It is found in the trans-Golgi network membrane. The catalysed reaction is ATP + H2O + phospholipidSide 1 = ADP + phosphate + phospholipidSide 2.. This chain is Probable phospholipid-transporting ATPase IIB (atp9b), found in Danio rerio (Zebrafish).